A 643-amino-acid chain; its full sequence is Complement component C1q receptor (643 aa).

A signal peptide spans 1–23; sequence MVTSTGLLLLLGLLGQLWAGAAA. The Extracellular segment spans residues 24-571; that stretch reads DSEAVVCEGT…HSDSDTDGQK (548 aa). The region spanning 31–173 is the C-type lectin domain; sequence EGTACYTAHW…CGTPDAPGNS (143 aa). Cystine bridges form between Cys-140–Cys-164, Cys-261–Cys-272, Cys-268–Cys-282, Cys-284–Cys-297, Cys-303–Cys-314, Cys-308–Cys-325, Cys-327–Cys-340, Cys-346–Cys-355, Cys-351–Cys-364, Cys-366–Cys-380, Cys-386–Cys-397, Cys-393–Cys-406, Cys-408–Cys-422, Cys-428–Cys-437, Cys-433–Cys-446, and Cys-448–Cys-461. 2 EGF-like domains span residues 257–298 and 299–341; these read PKFG…VTCA and SRNP…VHCV. N-linked (GlcNAc...) asparagine glycosylation occurs at Asn-322. Residues 342–381 form the EGF-like 3; calcium-binding domain; it reads DIDECEDSPCDQECINTPGGFHCECWVGYQSSGSKEEACE. The 42-residue stretch at 382 to 423 folds into the EGF-like 4; calcium-binding domain; it reads DVDECTAAYSPCAQGCTNTDGSFYCSCKEGYIMSGEDSTQCE. One can recognise an EGF-like 5; calcium-binding domain in the interval 424 to 462; it reads DIDECLGNPCDTLCINTDGSFRCGCPAGFELAPNGVSCT. Residues 469-517 form a disordered region; sequence ELPARPPQKEDKGDGKESTVPLTEMPGSLNGSKDVSNRAQTTDLSIQSD. Residues 475 to 485 are compositionally biased toward basic and acidic residues; sequence PQKEDKGDGKE. Positions 497-517 are enriched in polar residues; that stretch reads LNGSKDVSNRAQTTDLSIQSD. Asn-498 is a glycosylation site (N-linked (GlcNAc...) asparagine). The helical transmembrane segment at 572–592 threads the bilayer; the sequence is LLLFYILGTVVAISLLLALAL. Residues 593-643 are Cytoplasmic-facing; sequence GLLIYLKRKAKKEEIKEKKAQNAADSYSWIPERAESRAPENQYSPTPGTDC. A disordered region spans residues 606–643; it reads EIKEKKAQNAADSYSWIPERAESRAPENQYSPTPGTDC. Ser-618 carries the phosphoserine modification. Residues Tyr-619 and Tyr-635 each carry the phosphotyrosine modification. The segment covering 631–643 has biased composition (polar residues); sequence PENQYSPTPGTDC.

Homodimer. Interacts with C1QBP; the association may represent a cell surface C1q receptor. Interacts with surfactant protein A/SFTPA1. Interacts with multimerin-2/MMRN2. Interacts with DAG1; this interaction plays an important role in endothelial cell migration. Interacts with CBL. Interacts with IGFBP7. Interacts with VEGFR2. N- and O-glycosylated. In terms of processing, phosphorylated on Tyr-619 and Tyr-635 by SRC; these phosphorylations promote endothelial cell adhesion and migration. In terms of tissue distribution, widely expressed. Highly expressed in lung and heart. Expressed at lower level in brain, thymus, liver, spleen, intestine, kidney, adrenal gland, muscle and testis. Expressed on endothelial cells, platelets, undifferentiated monocytes and circulating natural killer cells.

The protein localises to the cell membrane. Cell surface receptor that plays a role in various physiological processes including inflammation, phagocytosis, and cell adhesion. Plays a role in phagocytosis and enhances the uptake of apoptotic cells and immune complexes by acting as a receptor for defense collagens including surfactant protein A/SFTPA1, C1q, and mannose-binding lectin (MBL2). Plays a role in the regulation of endothelial cell function and adhesion by activating angiogenesis. Mechanistically, exerts its angiogenic function by associating with beta-dystroglycan, leading to SRC-dependent phosphorylation and subsequent recruitment of CBL. In turn, CBL provides a docking site for downstream signaling components, such as CRKL to enhance cell migration. Participates in angiogenesis also by acting as a receptor for the ECM pan-endothelial glycoprotein multimerin-2/MMRN2 and IGFBP7 ligands. Both ligands play a non-redundant role in CD93-mediated endothelial cell function. Acts as a key regulator of endothelial barrier function through modulating VEGFR2 function. The protein is Complement component C1q receptor (Cd93) of Rattus norvegicus (Rat).